The following is a 556-amino-acid chain: Oxygen-dependent choline dehydrogenase (556 aa).

4-33 lines the FAD pocket; the sequence is DYIIIGAGSAGNVLATRLTEDPNTTVLLLE. The Proton acceptor role is filled by histidine 473.

Belongs to the GMC oxidoreductase family. FAD serves as cofactor.

The catalysed reaction is choline + A = betaine aldehyde + AH2. It catalyses the reaction betaine aldehyde + NAD(+) + H2O = glycine betaine + NADH + 2 H(+). It functions in the pathway amine and polyamine biosynthesis; betaine biosynthesis via choline pathway; betaine aldehyde from choline (cytochrome c reductase route): step 1/1. Its function is as follows. Involved in the biosynthesis of the osmoprotectant glycine betaine. Catalyzes the oxidation of choline to betaine aldehyde and betaine aldehyde to glycine betaine at the same rate. The polypeptide is Oxygen-dependent choline dehydrogenase (Escherichia coli O6:K15:H31 (strain 536 / UPEC)).